A 207-amino-acid chain; its full sequence is NAD--protein ADP-ribosyltransferase modB (207 aa).

Residue Arg73 participates in NAD(+) binding. Glu173 is a catalytic residue.

The protein belongs to the Tevenvirinae NAD--protein ADP-ribosyltransferase modA family.

It localises to the virion. The enzyme catalyses L-arginyl-[protein] + NAD(+) = N(omega)-(ADP-D-ribosyl)-L-arginyl-[protein] + nicotinamide + H(+). In terms of biological role, ADP-ribosyltransferase that regulates transcription by ADP-ribosylation of host ribosomal protein S1. Additional identified targets include proteins involved in either translation or cellular metabolism such as elongation factor-Tu or trigger factor. Also reprograms the host's gene-expression system by RNAylating host ribosomal protein S1. ModB can attach NAD-capped RNAs to target proteins post-transcriptionally resulting in covalent RNA-protein conjugates. The sequence is that of NAD--protein ADP-ribosyltransferase modB from Enterobacteria phage T4 (Bacteriophage T4).